Consider the following 117-residue polypeptide: DNA-directed RNA polymerase subunit omega (117 aa).

It belongs to the RNA polymerase subunit omega family. As to quaternary structure, the RNAP catalytic core consists of 2 alpha, 1 beta, 1 beta' and 1 omega subunit. When a sigma factor is associated with the core the holoenzyme is formed, which can initiate transcription.

It catalyses the reaction RNA(n) + a ribonucleoside 5'-triphosphate = RNA(n+1) + diphosphate. Its function is as follows. Promotes RNA polymerase assembly. Latches the N- and C-terminal regions of the beta' subunit thereby facilitating its interaction with the beta and alpha subunits. The sequence is that of DNA-directed RNA polymerase subunit omega from Roseobacter denitrificans (strain ATCC 33942 / OCh 114) (Erythrobacter sp. (strain OCh 114)).